A 333-amino-acid chain; its full sequence is tRNA-modifying protein YgfZ (333 aa).

Folate is bound by residues tryptophan 33 and tryptophan 195.

The protein belongs to the tRNA-modifying YgfZ family.

It localises to the cytoplasm. In terms of biological role, folate-binding protein involved in regulating the level of ATP-DnaA and in the modification of some tRNAs. It is probably a key factor in regulatory networks that act via tRNA modification, such as initiation of chromosomal replication. The sequence is that of tRNA-modifying protein YgfZ from Pectobacterium atrosepticum (strain SCRI 1043 / ATCC BAA-672) (Erwinia carotovora subsp. atroseptica).